The following is a 168-amino-acid chain: uncharacterized protein (168 aa).

Over residues 1-15 the composition is skewed to low complexity; the sequence is MKRIISSSKSLKQLS. The segment at 1 to 107 is disordered; sequence MKRIISSSKS…NNNNNNNNNN (107 aa). Over residues 33–47 the composition is skewed to acidic residues; the sequence is SDSDSDSDSDSDSDS. Positions 48-107 are enriched in low complexity; it reads DSNSNSNSNSNSNSNSNSNSNSNSNSNNNNNNTNNNNNNNNNNNNNNNNNNNNNNNNNNN.

This is an uncharacterized protein from Dictyostelium discoideum (Social amoeba).